Here is a 123-residue protein sequence, read N- to C-terminus: uncharacterized protein (123 aa).

2 helical membrane passes run 1-21 (MVLPLMFMYCKLAMLSLAVGC) and 103-123 (LESSFFMTISLYMNISYILLF).

Its subcellular location is the membrane. This is an uncharacterized protein from Saccharomyces cerevisiae (strain ATCC 204508 / S288c) (Baker's yeast).